A 439-amino-acid chain; its full sequence is Kinesin-like protein KIN-13 (439 aa).

1–5 (GSGKS) contributes to the ATP binding site. The region spanning 1–240 (GSGKSFTMMH…LRYADRVKEL (240 aa)) is the Kinesin motor domain.

This sequence belongs to the TRAFAC class myosin-kinesin ATPase superfamily. Kinesin family. KIN-13 subfamily. As to quaternary structure, interacts with PLK. In terms of processing, phosphorylated by PLK.

Its subcellular location is the cytoplasm. It localises to the cytoskeleton. The protein localises to the cell projection. The protein resides in the cilium. It is found in the flagellum. Its subcellular location is the flagellum basal body. It localises to the flagellum axoneme. The protein localises to the spindle. The protein resides in the chromosome. It is found in the centromere. Its subcellular location is the kinetochore. In terms of biological role, involved in cell cycle. Involved in formation of flagella, regulation of flagellar length, and formation of median bodies during interphase. Regulates flagellar length in all eight distal flagellar tips by promoting disassembly of the microtubules. Disassembles microtubules at the distal flagellar tips in a length-dependent manner in order to maintain different equilibrium lengths of the four flagellar pairs. Regulates interphase and mitotic microtubule dynamics. Regulates microtubule disassembly dynamics of the dual mitotic spindles and the median body. The protein is Kinesin-like protein KIN-13 of Giardia intestinalis (Giardia lamblia).